The primary structure comprises 145 residues: DNA polymerase epsilon subunit 3 (145 aa).

A2 carries the N-acetylalanine modification. T83 bears the Phosphothreonine mark. Positions 85–144 (LKEALEAYRREQKGKKEASEQKKKDKDKKDCEEQDKSREEEDEDEERLDEEEQNEEEEVD) form a coiled coil. Residues 93–123 (RREQKGKKEASEQKKKDKDKKDCEEQDKSRE) are compositionally biased toward basic and acidic residues. The segment at 93 to 145 (RREQKGKKEASEQKKKDKDKKDCEEQDKSREEEDEDEERLDEEEQNEEEEVDN) is disordered. Residue S121 is modified to Phosphoserine. Over residues 124–145 (EEDEDEERLDEEEQNEEEEVDN) the composition is skewed to acidic residues.

Component of the DNA polymerase epsilon complex consisting of four subunits: the catalytic subunit POLE and the accessory subunits POLE2, POLE3 and POLE4. Interaction with POLE4 is a prerequisite for further binding with POLE and POLE2. Heterodimer with CHRAC1; binds to DNA. Component of the CHRAC ISWI chromatin remodeling complex at least composed of SMARCA5/SNF2H, BAZ1A/ACF1, CHRAC1 and POLE3; the complex preferentially binds DNA through the CHRAC1-POLE3 heterodimer and possesses ATP-dependent nucleosome-remodeling activity. Within the complex, the heterodimer with CHRAC1 interacts with SMARCA5/SNF2H; the interaction is direct and enhances nucleosome sliding activity by the SMARCA5/SNF2H and BAZ1A/ACF1 interaction. Within the complex, the heterodimer with CHRAC1 interacts with BAZ1A/ACF1; the interactions are direct.

The protein resides in the nucleus. Its function is as follows. Accessory component of the DNA polymerase epsilon complex. Participates in DNA repair and in chromosomal DNA replication. Forms a complex with CHRAC1 and binds naked DNA, which is then incorporated into chromatin, aided by the nucleosome-remodeling activity of ISWI/SNF2H and ACF1. Does not enhance nucleosome sliding activity of the ACF-5 ISWI chromatin remodeling complex. The protein is DNA polymerase epsilon subunit 3 (Pole3) of Rattus norvegicus (Rat).